We begin with the raw amino-acid sequence, 235 residues long: Octanoyltransferase (235 aa).

Residues 28-203 (GRAEETLLLL…PFAGLPADAL (176 aa)) enclose the BPL/LPL catalytic domain. Substrate is bound by residues 66 to 73 (RGGDVTWH), 133 to 135 (SIG), and 146 to 148 (GFA). C164 functions as the Acyl-thioester intermediate in the catalytic mechanism. The interval 202-235 (ALPEQPRDAVQPSSCDDVHAPSTTSRRPPCPLTV) is disordered.

It belongs to the LipB family.

It localises to the cytoplasm. The catalysed reaction is octanoyl-[ACP] + L-lysyl-[protein] = N(6)-octanoyl-L-lysyl-[protein] + holo-[ACP] + H(+). It functions in the pathway protein modification; protein lipoylation via endogenous pathway; protein N(6)-(lipoyl)lysine from octanoyl-[acyl-carrier-protein]: step 1/2. Functionally, catalyzes the transfer of endogenously produced octanoic acid from octanoyl-acyl-carrier-protein onto the lipoyl domains of lipoate-dependent enzymes. Lipoyl-ACP can also act as a substrate although octanoyl-ACP is likely to be the physiological substrate. The protein is Octanoyltransferase of Geobacter sulfurreducens (strain ATCC 51573 / DSM 12127 / PCA).